The following is a 221-amino-acid chain: 7-cyano-7-deazaguanine synthase (221 aa).

Position 10–20 (F10–L20) interacts with ATP. Zn(2+)-binding residues include C186, C195, C198, and C201.

It belongs to the QueC family. As to quaternary structure, homodimer. Zn(2+) is required as a cofactor.

The catalysed reaction is 7-carboxy-7-deazaguanine + NH4(+) + ATP = 7-cyano-7-deazaguanine + ADP + phosphate + H2O + H(+). The protein operates within purine metabolism; 7-cyano-7-deazaguanine biosynthesis. Functionally, catalyzes the ATP-dependent conversion of 7-carboxy-7-deazaguanine (CDG) to 7-cyano-7-deazaguanine (preQ(0)). The sequence is that of 7-cyano-7-deazaguanine synthase from Geobacillus thermodenitrificans (strain NG80-2).